The chain runs to 394 residues: Elongation factor Tu 1 (394 aa).

The 195-residue stretch at 10 to 204 (KPHVNVGTIG…ALDSYIPEPE (195 aa)) folds into the tr-type G domain. The segment at 19–26 (GHVDHGKT) is G1. 19 to 26 (GHVDHGKT) is a binding site for GTP. Thr26 serves as a coordination point for Mg(2+). Positions 60-64 (GITIS) are G2. Residues 81–84 (DCPG) form a G3 region. GTP contacts are provided by residues 81 to 85 (DCPGH) and 136 to 139 (NKCD). The segment at 136–139 (NKCD) is G4. A G5 region spans residues 174 to 176 (SAL).

Belongs to the TRAFAC class translation factor GTPase superfamily. Classic translation factor GTPase family. EF-Tu/EF-1A subfamily. In terms of assembly, monomer.

Its subcellular location is the cytoplasm. The enzyme catalyses GTP + H2O = GDP + phosphate + H(+). Its function is as follows. GTP hydrolase that promotes the GTP-dependent binding of aminoacyl-tRNA to the A-site of ribosomes during protein biosynthesis. This is Elongation factor Tu 1 from Vibrio vulnificus (strain YJ016).